A 256-amino-acid polypeptide reads, in one-letter code: Deoxyribose-phosphate aldolase (256 aa).

Asp102 serves as the catalytic Proton donor/acceptor. Lys165 functions as the Schiff-base intermediate with acetaldehyde in the catalytic mechanism. Lys197 (proton donor/acceptor) is an active-site residue.

Belongs to the DeoC/FbaB aldolase family. DeoC type 2 subfamily.

The protein localises to the cytoplasm. It carries out the reaction 2-deoxy-D-ribose 5-phosphate = D-glyceraldehyde 3-phosphate + acetaldehyde. It functions in the pathway carbohydrate degradation; 2-deoxy-D-ribose 1-phosphate degradation; D-glyceraldehyde 3-phosphate and acetaldehyde from 2-deoxy-alpha-D-ribose 1-phosphate: step 2/2. Catalyzes a reversible aldol reaction between acetaldehyde and D-glyceraldehyde 3-phosphate to generate 2-deoxy-D-ribose 5-phosphate. This Shewanella baltica (strain OS155 / ATCC BAA-1091) protein is Deoxyribose-phosphate aldolase.